Here is a 377-residue protein sequence, read N- to C-terminus: Succinyl-diaminopimelate desuccinylase (377 aa).

H68 is a Zn(2+) binding site. D70 is an active-site residue. D101 is a binding site for Zn(2+). The active-site Proton acceptor is E135. Zn(2+) contacts are provided by E136, E164, and H350.

It belongs to the peptidase M20A family. DapE subfamily. Homodimer. It depends on Zn(2+) as a cofactor.

The enzyme catalyses N-succinyl-(2S,6S)-2,6-diaminopimelate + H2O = (2S,6S)-2,6-diaminopimelate + succinate. It functions in the pathway amino-acid biosynthesis; L-lysine biosynthesis via DAP pathway; LL-2,6-diaminopimelate from (S)-tetrahydrodipicolinate (succinylase route): step 3/3. Functionally, catalyzes the hydrolysis of N-succinyl-L,L-diaminopimelic acid (SDAP), forming succinate and LL-2,6-diaminopimelate (DAP), an intermediate involved in the bacterial biosynthesis of lysine and meso-diaminopimelic acid, an essential component of bacterial cell walls. The sequence is that of Succinyl-diaminopimelate desuccinylase (dapE) from Vibrio cholerae serotype O1 (strain ATCC 39315 / El Tor Inaba N16961).